The following is a 164-amino-acid chain: MDGYVSHYTNKLDAKGRVSIPAPFRAVLVRDGFDGLYVHPSIDQEALDCGGHALLREIDGLLSGLSPYSEERDLFSTALIGTSEILKVDSEGRTILTETLKSYAGITGEVTFVGHGHKFQIWEPGRFRAHLEEARNRVRDLRRQLSARHAAPDAPPLRSHGARE.

SpoVT-AbrB domains are found at residues 7 to 60 and 83 to 126; these read HYTN…EIDG and SEIL…EPGR. Residues 144–164 form a disordered region; sequence QLSARHAAPDAPPLRSHGARE.

It belongs to the MraZ family. Forms oligomers.

It localises to the cytoplasm. The protein resides in the nucleoid. The polypeptide is Transcriptional regulator MraZ (Methylocella silvestris (strain DSM 15510 / CIP 108128 / LMG 27833 / NCIMB 13906 / BL2)).